Consider the following 398-residue polypeptide: NADH-quinone oxidoreductase subunit D (398 aa).

Belongs to the complex I 49 kDa subunit family. NDH-1 is composed of 14 different subunits. Subunits NuoB, C, D, E, F, and G constitute the peripheral sector of the complex.

Its subcellular location is the cell inner membrane. The catalysed reaction is a quinone + NADH + 5 H(+)(in) = a quinol + NAD(+) + 4 H(+)(out). NDH-1 shuttles electrons from NADH, via FMN and iron-sulfur (Fe-S) centers, to quinones in the respiratory chain. The immediate electron acceptor for the enzyme in this species is believed to be ubiquinone. Couples the redox reaction to proton translocation (for every two electrons transferred, four hydrogen ions are translocated across the cytoplasmic membrane), and thus conserves the redox energy in a proton gradient. The polypeptide is NADH-quinone oxidoreductase subunit D (Bradyrhizobium diazoefficiens (strain JCM 10833 / BCRC 13528 / IAM 13628 / NBRC 14792 / USDA 110)).